A 1007-amino-acid polypeptide reads, in one-letter code: Beta-galactosidase (1007 aa).

The disordered stretch occupies residues 29–48 (TIPPHSDHESFQSQEELEEG). Glu-465 serves as the catalytic Proton donor. Glu-532 (nucleophile) is an active-site residue.

It belongs to the glycosyl hydrolase 2 family. As to quaternary structure, monomer.

It catalyses the reaction Hydrolysis of terminal non-reducing beta-D-galactose residues in beta-D-galactosides.. The protein is Beta-galactosidase (lacZ) of Lactobacillus delbrueckii subsp. bulgaricus.